The following is a 929-amino-acid chain: Formin-like protein 11 (929 aa).

An N-terminal signal peptide occupies residues 1-28; it reads MMRHCRREWLLALCLISVQLLIPTGCEG. The tract at residues 153-215 is disordered; that stretch reads ESSTTKSIPE…KSVAEKKKDS (63 aa). The segment covering 171–189 has biased composition (polar residues); it reads KTSTPKPVNKPTDSVSSPP. The span at 191–215 shows a compositional bias: basic and acidic residues; the sequence is RSYKSAPTEKENPPTKSVAEKKKDS. A helical membrane pass occupies residues 222–242; it reads FIGLSIAGIALMAHLCLCCFM. 2 disordered regions span residues 372-472 and 726-749; these read PVGS…ENSN and AAKE…SEQT. Residues 382–447 are compositionally biased toward pro residues; that stretch reads MQPPVMPPPI…GPPRPPPPAM (66 aa). An FH2 domain is found at 468 to 898; sequence VENSNEAKTK…KAKAKQPSQS (431 aa). Positions 738–749 are enriched in basic and acidic residues; it reads KTDDLGDKSEQT.

Belongs to the formin-like family. Class-I subfamily.

The protein localises to the membrane. In Oryza sativa subsp. japonica (Rice), this protein is Formin-like protein 11 (FH11).